The primary structure comprises 388 residues: Succinate--CoA ligase [ADP-forming] subunit beta (388 aa).

The ATP-grasp domain maps to 9–244 (KQLFAEYGLP…PSQDDPREAH (236 aa)). Residues Lys46, 53–55 (GRG), Glu99, Thr102, and Glu107 contribute to the ATP site. Residues Asn199 and Asp213 each coordinate Mg(2+). Substrate-binding positions include Asn264 and 321 to 323 (GIV).

It belongs to the succinate/malate CoA ligase beta subunit family. As to quaternary structure, heterotetramer of two alpha and two beta subunits. Mg(2+) is required as a cofactor.

It carries out the reaction succinate + ATP + CoA = succinyl-CoA + ADP + phosphate. The enzyme catalyses GTP + succinate + CoA = succinyl-CoA + GDP + phosphate. It participates in carbohydrate metabolism; tricarboxylic acid cycle; succinate from succinyl-CoA (ligase route): step 1/1. Functionally, succinyl-CoA synthetase functions in the citric acid cycle (TCA), coupling the hydrolysis of succinyl-CoA to the synthesis of either ATP or GTP and thus represents the only step of substrate-level phosphorylation in the TCA. The beta subunit provides nucleotide specificity of the enzyme and binds the substrate succinate, while the binding sites for coenzyme A and phosphate are found in the alpha subunit. The sequence is that of Succinate--CoA ligase [ADP-forming] subunit beta from Aeromonas hydrophila subsp. hydrophila (strain ATCC 7966 / DSM 30187 / BCRC 13018 / CCUG 14551 / JCM 1027 / KCTC 2358 / NCIMB 9240 / NCTC 8049).